A 231-amino-acid chain; its full sequence is UPF0749 protein YlxW (231 aa).

The N-terminal stretch at 1-34 is a signal peptide; the sequence is MRGKSAVLLSLIMLIAGFLISFSFQMTKENNKSA. The stretch at 44-94 forms a coiled coil; the sequence is YALRDELLKQEKENKKFEKELYQKQNKVRQAENKLKKEKSEYYNVLEDTEK.

The protein belongs to the UPF0749 family.

Its function is as follows. May be involved in cell division and sporulation. This Bacillus subtilis (strain 168) protein is UPF0749 protein YlxW (ylxW).